A 1213-amino-acid chain; its full sequence is DNA-directed RNA polymerase subunit beta' (1213 aa).

Residues C60, C62, C75, and C78 each contribute to the Zn(2+) site. Mg(2+) contacts are provided by D450, D452, and D454. The Zn(2+) site is built by C819, C893, C900, and C903.

It belongs to the RNA polymerase beta' chain family. The RNAP catalytic core consists of 2 alpha, 1 beta, 1 beta' and 1 omega subunit. When a sigma factor is associated with the core the holoenzyme is formed, which can initiate transcription. Mg(2+) is required as a cofactor. The cofactor is Zn(2+).

The catalysed reaction is RNA(n) + a ribonucleoside 5'-triphosphate = RNA(n+1) + diphosphate. In terms of biological role, DNA-dependent RNA polymerase catalyzes the transcription of DNA into RNA using the four ribonucleoside triphosphates as substrates. The polypeptide is DNA-directed RNA polymerase subunit beta' (Streptococcus pyogenes serotype M4 (strain MGAS10750)).